A 439-amino-acid polypeptide reads, in one-letter code: uncharacterized protein (439 aa).

CBS domains are found at residues 195–254 and 256–314; these read LTPA…SIEK and MTKN…KQPQ.

This is an uncharacterized protein from Bacillus subtilis (strain 168).